The following is a 232-amino-acid chain: Large ribosomal subunit protein uL1 (232 aa).

It belongs to the universal ribosomal protein uL1 family. In terms of assembly, part of the 50S ribosomal subunit.

In terms of biological role, binds directly to 23S rRNA. The L1 stalk is quite mobile in the ribosome, and is involved in E site tRNA release. Its function is as follows. Protein L1 is also a translational repressor protein, it controls the translation of the L11 operon by binding to its mRNA. In Thermosipho melanesiensis (strain DSM 12029 / CIP 104789 / BI429), this protein is Large ribosomal subunit protein uL1.